Reading from the N-terminus, the 234-residue chain is MSNKIIVALDYETEKEALQLVDQIDPSLCRLKVGKEMFTTLGTNFVKLLQDRDFDVFLDLKFHDIPNTVARAVRSAADLGVWMVDLHASGGLRMMEEAKKILEPYGKDAPILISVTVLTSMEDLDLLQIGINASPMEQVIRLAHLSQRAGLDGVVCSPQEVEILRQHLGKEFKLITPGIRPVGSEFGDQRRVMTPPAAIEAGSDYLVIGRPITQAANPAEVLRSINASIANLIA.

Substrate-binding positions include Asp10, Lys32, 59–68 (DLKFHDIPNT), Thr119, Arg180, Gln189, Gly209, and Arg210. Residue Lys61 is the Proton donor of the active site.

The protein belongs to the OMP decarboxylase family. Type 1 subfamily. In terms of assembly, homodimer.

The enzyme catalyses orotidine 5'-phosphate + H(+) = UMP + CO2. Its pathway is pyrimidine metabolism; UMP biosynthesis via de novo pathway; UMP from orotate: step 2/2. Catalyzes the decarboxylation of orotidine 5'-monophosphate (OMP) to uridine 5'-monophosphate (UMP). This is Orotidine 5'-phosphate decarboxylase from Mannheimia succiniciproducens (strain KCTC 0769BP / MBEL55E).